A 184-amino-acid polypeptide reads, in one-letter code: Cytidylate kinase (184 aa).

Gly8 to Thr16 contributes to the ATP binding site.

It belongs to the cytidylate kinase family. Type 2 subfamily.

It is found in the cytoplasm. It catalyses the reaction CMP + ATP = CDP + ADP. It carries out the reaction dCMP + ATP = dCDP + ADP. The sequence is that of Cytidylate kinase from Pyrobaculum arsenaticum (strain DSM 13514 / JCM 11321 / PZ6).